The primary structure comprises 338 residues: Glycerol-3-phosphate dehydrogenase [NAD(P)+] (338 aa).

NADPH contacts are provided by serine 13, tryptophan 14, and lysine 108. Residues lysine 108, glycine 139, and serine 141 each contribute to the sn-glycerol 3-phosphate site. Alanine 143 contacts NADPH. Sn-glycerol 3-phosphate is bound by residues lysine 194, aspartate 247, serine 257, arginine 258, and asparagine 259. Lysine 194 (proton acceptor) is an active-site residue. Residue arginine 258 coordinates NADPH. NADPH contacts are provided by valine 282 and glutamate 284.

This sequence belongs to the NAD-dependent glycerol-3-phosphate dehydrogenase family.

It localises to the cytoplasm. The catalysed reaction is sn-glycerol 3-phosphate + NAD(+) = dihydroxyacetone phosphate + NADH + H(+). It catalyses the reaction sn-glycerol 3-phosphate + NADP(+) = dihydroxyacetone phosphate + NADPH + H(+). It participates in membrane lipid metabolism; glycerophospholipid metabolism. Its function is as follows. Catalyzes the reduction of the glycolytic intermediate dihydroxyacetone phosphate (DHAP) to sn-glycerol 3-phosphate (G3P), the key precursor for phospholipid synthesis. The polypeptide is Glycerol-3-phosphate dehydrogenase [NAD(P)+] (Streptococcus gordonii (strain Challis / ATCC 35105 / BCRC 15272 / CH1 / DL1 / V288)).